A 431-amino-acid polypeptide reads, in one-letter code: Probable sodium/metabolite cotransporter BASS3, chloroplastic (431 aa).

The N-terminal 70 residues, 1–70 (MTLIASLSLP…RRNSGLVPVV (70 aa)), are a transit peptide targeting the chloroplast. Helical transmembrane passes span 110 to 130 (FWSA…LSYP), 145 to 165 (LGGI…ALAF), 169 to 189 (VPLS…GVLV), 198 to 218 (TFYA…SSYA), 238 to 258 (IASV…VVPV), 261 to 281 (VAMS…GLVL), 288 to 308 (VVTL…SLCI), 325 to 345 (LGLI…GYWF), and 387 to 407 (VPAA…ASFW).

The protein belongs to the bile acid:sodium symporter (BASS) (TC 2.A.28) family.

The protein resides in the membrane. It localises to the plastid. The protein localises to the chloroplast envelope. Functionally, may function as sodium-coupled metabolite transporter across the chloroplast envelope. The chain is Probable sodium/metabolite cotransporter BASS3, chloroplastic (BASS3) from Arabidopsis thaliana (Mouse-ear cress).